The sequence spans 248 residues: Pulmonary surfactant-associated protein A (248 aa).

The signal sequence occupies residues 1–17 (MLLCSLTLMLLWMVASG). The Collagen-like domain maps to 28 to 100 (GSPGIPGTPG…PGERGPPGFP (73 aa)). The interval 29-103 (SPGIPGTPGS…RGPPGFPAYL (75 aa)) is disordered. Residues 42–51 (PGRDGRDGIK) show a composition bias toward basic and acidic residues. The span at 54-65 (PGPPGPMGPPGG) shows a compositional bias: pro residues. Residues 69–82 (LPGRDGMTGAPGLP) are compositionally biased toward low complexity. The span at 84–93 (ERGEKGEPGE) shows a compositional bias: basic and acidic residues. The 121-residue stretch at 127-247 (LQGSMLEVGE…CLQYRLAICE (121 aa)) folds into the C-type lectin domain. 2 disulfides stabilise this stretch: Cys-155/Cys-246 and Cys-224/Cys-238. Asn-207 carries an N-linked (GlcNAc...) asparagine glycan. Ca(2+) contacts are provided by Glu-215, Arg-217, Asn-234, and Asp-235.

Belongs to the SFTPA family. As to quaternary structure, oligomeric complex of 6 set of homotrimers.

The protein resides in the secreted. It is found in the extracellular space. It localises to the extracellular matrix. The protein localises to the surface film. In terms of biological role, in presence of calcium ions, it binds to surfactant phospholipids and contributes to lower the surface tension at the air-liquid interface in the alveoli of the mammalian lung and is essential for normal respiration. Enhances the expression of MYO18A/SP-R210 on alveolar macrophages. The protein is Pulmonary surfactant-associated protein A (SFTPA1) of Ovis aries (Sheep).